The sequence spans 256 residues: MALSLTNKNVVFVAGLGGIGLDTTKELLKRDLKNLVILDRIDNPVVIAELKTINPKVTVTFIPYDVTVPITETKKLLKTIFDKLKTVDILINGAGILDDHQIERTIAVNYTGLVNTTTAILDFWDKRKGGPGGIICNIGSVTGFNAIYQVPVYSGTKAAVVNFTSSLAKLAPITGVTAYTVNPGITRTTLVHKFNSWLDVEPQVAEKLLAHPTQSSQACGENFVKAIELNQNGAIWKLDRGTLEAIQWSKHWDSGI.

An NAD(+)-binding site is contributed by 12–41 (FVAGLGGIGLDTTKELLKRDLKNLVILDRI). Residue Ser-140 participates in substrate binding. Catalysis depends on Tyr-153, which acts as the Proton acceptor.

It belongs to the short-chain dehydrogenases/reductases (SDR) family. Homodimer.

The catalysed reaction is a primary alcohol + NAD(+) = an aldehyde + NADH + H(+). It catalyses the reaction a secondary alcohol + NAD(+) = a ketone + NADH + H(+). This is Alcohol dehydrogenase from Drosophila ananassae (Fruit fly).